The sequence spans 288 residues: Small ribosomal subunit protein uS3 (288 aa).

The region spanning 38-106 (IRRMMSKGLE…QVQLNIIEVK (69 aa)) is the KH type-2 domain. A disordered region spans residues 209-288 (PGRETPAEAP…TQPAETQQEG (80 aa)). The segment covering 219-232 (SRPRRERGDRSERP) has biased composition (basic and acidic residues). Residues 249–264 (AGRAAATTIAQAAETP) show a composition bias toward low complexity. Positions 277 to 288 (AATQPAETQQEG) are enriched in polar residues.

The protein belongs to the universal ribosomal protein uS3 family. As to quaternary structure, part of the 30S ribosomal subunit. Forms a tight complex with proteins S10 and S14.

In terms of biological role, binds the lower part of the 30S subunit head. Binds mRNA in the 70S ribosome, positioning it for translation. The polypeptide is Small ribosomal subunit protein uS3 (Salinispora tropica (strain ATCC BAA-916 / DSM 44818 / JCM 13857 / NBRC 105044 / CNB-440)).